Consider the following 340-residue polypeptide: MIAECIKKVASHSDLSVYEAKGAMQDIMSGNATDGQIGAFLTALVMKGETSSEIAAFASVMRENAVQITPKRNGMLVDTCGTGGDGKNTFNISTAAAFTAAGAGVTVVKHGNRGATSKCGSADVLEALGIKIDISPERVCEIIDENGIGFMFAQSHHPAMKYAGKVRKEIGIRSFFNLIGPLSNPAGADAQLLGVYDSPLTEKIAEVLNILGTKRAMVVHGDGYDEITTTGITQVSEVNDGQVRSYSLDPSSFGFQKADAASLFGGDSQYNAHIIRSVLSGDEGPRRDIVILNAAAAIYLGERAGSIADGIKYAEKSIDSGLALEKLENLILLSGGKNDS.

Residues Gly81, 84–85 (GD), Thr89, 91–94 (NIST), 109–117 (KHGNRGATS), and Ser121 contribute to the 5-phospho-alpha-D-ribose 1-diphosphate site. An anthranilate-binding site is contributed by Gly81. Ser93 lines the Mg(2+) pocket. Asn112 lines the anthranilate pocket. Arg167 is a binding site for anthranilate. Residues Asp225 and Glu226 each contribute to the Mg(2+) site.

It belongs to the anthranilate phosphoribosyltransferase family. In terms of assembly, homodimer. Requires Mg(2+) as cofactor.

It catalyses the reaction N-(5-phospho-beta-D-ribosyl)anthranilate + diphosphate = 5-phospho-alpha-D-ribose 1-diphosphate + anthranilate. Its pathway is amino-acid biosynthesis; L-tryptophan biosynthesis; L-tryptophan from chorismate: step 2/5. Catalyzes the transfer of the phosphoribosyl group of 5-phosphorylribose-1-pyrophosphate (PRPP) to anthranilate to yield N-(5'-phosphoribosyl)-anthranilate (PRA). The protein is Anthranilate phosphoribosyltransferase of Methanocorpusculum labreanum (strain ATCC 43576 / DSM 4855 / Z).